Reading from the N-terminus, the 88-residue chain is Apolipoprotein C-I (88 aa).

The first 26 residues, 1-26 (MRLFIALPVLIVVVAMALEGPAPAQA), serve as a signal peptide directing secretion.

Belongs to the apolipoprotein C1 family.

The protein resides in the secreted. Its function is as follows. Inhibitor of lipoprotein binding to the low density lipoprotein (LDL) receptor, LDL receptor-related protein, and very low density lipoprotein (VLDL) receptor. Associates with high density lipoproteins (HDL) and the triacylglycerol-rich lipoproteins in the plasma and makes up about 10% of the protein of the VLDL and 2% of that of HDL. Appears to interfere directly with fatty acid uptake and is also the major plasma inhibitor of cholesteryl ester transfer protein (CETP). Modulates the interaction of APOE with beta-migrating VLDL and inhibits binding of beta-VLDL to the LDL receptor-related protein. Binds free fatty acids and reduces their intracellular esterification. This is Apolipoprotein C-I (Apoc1) from Grammomys surdaster (African woodland thicket rat).